We begin with the raw amino-acid sequence, 426 residues long: uncharacterized protein (426 aa).

This is an uncharacterized protein from Corynebacterium glutamicum (strain ATCC 13032 / DSM 20300 / JCM 1318 / BCRC 11384 / CCUG 27702 / LMG 3730 / NBRC 12168 / NCIMB 10025 / NRRL B-2784 / 534).